Reading from the N-terminus, the 874-residue chain is MYQTTAELRSAFLEFFRSHGHQVVDSSSLVPGNDPTLLFTNAGMNQFKDVFLGMDKRNYTRATTAQRCVRAGGKHNDLDNVGYTARHHTFFEMLGNFSFGDYFKEEAICFGWSFLTETLKLPKERLCVTIYQTDDEAFEIWNKKIGVAAENIIRIGDNKGAPYASDNFWQMGDTGPCGPCTEIFYDHGDHIWGGRPGSPEEDGDRFIEIWNIVFMQYNRHISGEMLPLPKPSVDTGMGIERIAAIMQGVHSNYEIDIFRALIAKAAEIIGVTDLSNKSLRVIADHIRSCAFLVADGVMPSNEGRGYVLRRIIRRAVRHGNKLGATEAFFYKLVPTLIDVMGDAAKGLAETQVIVEKALKAEEEQFARTLERGLGILDAALSELTGDTLDGETVFKLYDTYGFPMDLTADVCRERNIIVDEAGFEAAMAEQRSRAQAAGNFGADYNAALKIDAETAFCGYTELVGQAKVTAIYQNGESVTAIKAGDEAVLVLDVTPFYAESGGQVGDKGQLVANGIEFTVNDTQKYGQATGHQGVLVAGSLSIGQMVEAKVDKKLRHRTQLNHSVTHLLHAALRQVLGTHVTQKGSLVDPERLRFDFSHFEAVKPAELKKVEELVNTQIRRNHELKVAEMAIDEAKEKGAMALFGEKYDAQVRVVTMGDFSIELCGGTHVGRTGDIGLFKITSEGGIAAGVRRIEAVTGAAAMAYVAQQQAELEEAAALLKGDTHSVVAKLKAQLDKMKQLEKDMAQLKDKLAAAASADLVGDAVVVNGVNVLIKKLDGVEAGSLRGLQDELKQKLKSAIIVLGTAQEGKVNLIAGVSNDLVGKVKAGELVAMVAAQVGGKGGGRPDMAQAGGSQPENLDAALAQVLPWITERLA.

Zn(2+) contacts are provided by His-562, His-566, Cys-664, and His-668.

The protein belongs to the class-II aminoacyl-tRNA synthetase family. Requires Zn(2+) as cofactor.

Its subcellular location is the cytoplasm. It carries out the reaction tRNA(Ala) + L-alanine + ATP = L-alanyl-tRNA(Ala) + AMP + diphosphate. Its function is as follows. Catalyzes the attachment of alanine to tRNA(Ala) in a two-step reaction: alanine is first activated by ATP to form Ala-AMP and then transferred to the acceptor end of tRNA(Ala). Also edits incorrectly charged Ser-tRNA(Ala) and Gly-tRNA(Ala) via its editing domain. The protein is Alanine--tRNA ligase of Shewanella putrefaciens (strain CN-32 / ATCC BAA-453).